The chain runs to 169 residues: MRALRAPVLVMGLVLLICTAAQSDASANKVEKTLRRIMEIMRQVENSADDESAQKTESAPEPKDTHHLKTASGETILEIFPRDLSRKEKFITILTGRRLSNPLRHQSCVFETSDLVVFHPSGPLYFGPKCKKDVYRLYHNTRDCTIPAHYKRCARLLTRLAGTRKCQEG.

An N-terminal signal peptide occupies residues methionine 1–alanine 25. The segment at glutamate 45–leucine 68 is disordered. Over residues serine 52–histidine 67 the composition is skewed to basic and acidic residues. 2 disulfide bridges follow: cysteine 130/cysteine 166 and cysteine 144/cysteine 153.

This sequence belongs to the ALKAL family. As to quaternary structure, homodimer. As to expression, expressed at high level in the notochord and iridophore stripes of the trunk, as well as in the eye and swim bladder.

The protein resides in the secreted. It is found in the cell membrane. Cytokine that acts as a physiological ligand for receptor tyrosine kinases LTK and ALK. Required for neural crest cell differentiation and iridophore development during embryonic iridophore development and adult stripe development by acting as a receptor for LTK. This Danio rerio (Zebrafish) protein is ALK and LTK ligand 2a.